The sequence spans 687 residues: Threonine--tRNA ligase (687 aa).

Residues 1-67 (MAHLIEAAPN…EQDSKFTPVP (67 aa)) enclose the TGS domain. Residues 266 to 572 (DHRRLGAELD…LLEHYAGAFP (307 aa)) form a catalytic region. Zn(2+) contacts are provided by Cys371, His422, and His549.

Belongs to the class-II aminoacyl-tRNA synthetase family. As to quaternary structure, homodimer. It depends on Zn(2+) as a cofactor.

Its subcellular location is the cytoplasm. The enzyme catalyses tRNA(Thr) + L-threonine + ATP = L-threonyl-tRNA(Thr) + AMP + diphosphate + H(+). Its function is as follows. Catalyzes the attachment of threonine to tRNA(Thr) in a two-step reaction: L-threonine is first activated by ATP to form Thr-AMP and then transferred to the acceptor end of tRNA(Thr). Also edits incorrectly charged L-seryl-tRNA(Thr). The polypeptide is Threonine--tRNA ligase (Corynebacterium diphtheriae (strain ATCC 700971 / NCTC 13129 / Biotype gravis)).